The sequence spans 154 residues: Ribonuclease H (154 aa).

In terms of domain architecture, RNase H type-1 spans 9–150 (SHPHIIIYTD…ADALANKGVE (142 aa)). The Mg(2+) site is built by aspartate 18, glutamate 56, aspartate 78, and aspartate 142.

It belongs to the RNase H family. In terms of assembly, monomer. The cofactor is Mg(2+).

Its subcellular location is the cytoplasm. The catalysed reaction is Endonucleolytic cleavage to 5'-phosphomonoester.. Endonuclease that specifically degrades the RNA of RNA-DNA hybrids. The chain is Ribonuclease H from Polynucleobacter asymbioticus (strain DSM 18221 / CIP 109841 / QLW-P1DMWA-1) (Polynucleobacter necessarius subsp. asymbioticus).